Consider the following 375-residue polypeptide: Ornithine transcarbamylase, chloroplastic (375 aa).

The N-terminal 53 residues, 1–53 (MAAAMASHVSTARSPALSFSSSSSSFFPGTTLRRFSAVSLPSPALPRLRVSCQ), are a transit peptide targeting the chloroplast. Ala-54 carries the N-acetylalanine modification. Residues 123–126 (SMRT), Arg-174, His-201, and Gln-204 each bind carbamoyl phosphate. Residues Asn-232, Asp-293, Ser-297, and Met-298 each contribute to the L-ornithine site. The active-site Proton acceptor is the Cys-333. Carbamoyl phosphate is bound by residues 333–334 (CL) and Arg-361.

Belongs to the aspartate/ornithine carbamoyltransferase superfamily. OTCase family.

Its subcellular location is the plastid. It localises to the chloroplast. It carries out the reaction carbamoyl phosphate + L-ornithine = L-citrulline + phosphate + H(+). This chain is Ornithine transcarbamylase, chloroplastic (OTC), found in Arabidopsis thaliana (Mouse-ear cress).